Reading from the N-terminus, the 233-residue chain is Probable GTP-binding protein EngB (233 aa).

The EngB-type G domain maps to 31 to 205; it reads TGVEIAFAGR…RRKLDTWFGP (175 aa). Residues 39-46, 66-70, 84-87, 151-154, and 184-186 each bind GTP; these read GRSNAGKS, GRTQL, DLPG, TKAD, and FSS. Ser46 and Thr68 together coordinate Mg(2+).

This sequence belongs to the TRAFAC class TrmE-Era-EngA-EngB-Septin-like GTPase superfamily. EngB GTPase family. The cofactor is Mg(2+).

Its function is as follows. Necessary for normal cell division and for the maintenance of normal septation. This Photobacterium profundum (strain SS9) protein is Probable GTP-binding protein EngB.